The primary structure comprises 363 residues: Chorismate synthase (363 aa).

NADP(+) contacts are provided by Arg-48 and Arg-54. FMN contacts are provided by residues 125 to 127, 237 to 238, Gly-277, 292 to 296, and Arg-318; these read RSS, NA, and KPTSS.

Belongs to the chorismate synthase family. Homotetramer. The cofactor is FMNH2.

The enzyme catalyses 5-O-(1-carboxyvinyl)-3-phosphoshikimate = chorismate + phosphate. It functions in the pathway metabolic intermediate biosynthesis; chorismate biosynthesis; chorismate from D-erythrose 4-phosphate and phosphoenolpyruvate: step 7/7. Functionally, catalyzes the anti-1,4-elimination of the C-3 phosphate and the C-6 proR hydrogen from 5-enolpyruvylshikimate-3-phosphate (EPSP) to yield chorismate, which is the branch point compound that serves as the starting substrate for the three terminal pathways of aromatic amino acid biosynthesis. This reaction introduces a second double bond into the aromatic ring system. The protein is Chorismate synthase of Pseudomonas savastanoi pv. phaseolicola (strain 1448A / Race 6) (Pseudomonas syringae pv. phaseolicola (strain 1448A / Race 6)).